Here is an 81-residue protein sequence, read N- to C-terminus: Small ribosomal subunit protein bS18 (81 aa).

Belongs to the bacterial ribosomal protein bS18 family. Part of the 30S ribosomal subunit. Forms a tight heterodimer with protein bS6.

Functionally, binds as a heterodimer with protein bS6 to the central domain of the 16S rRNA, where it helps stabilize the platform of the 30S subunit. The polypeptide is Small ribosomal subunit protein bS18 (Parvibaculum lavamentivorans (strain DS-1 / DSM 13023 / NCIMB 13966)).